A 200-amino-acid polypeptide reads, in one-letter code: Small ribosomal subunit protein uS5 (200 aa).

The span at 1–12 (MGRPRTSQTRGQ) shows a compositional bias: polar residues. A disordered region spans residues 1-49 (MGRPRTSQTRGQGPSGATGGNPRGGGSTTRERDARGARPGERDGGSEIQ). A compositionally biased stretch (gly residues) spans 13–27 (GPSGATGGNPRGGGS). The span at 29–49 (TRERDARGARPGERDGGSEIQ) shows a compositional bias: basic and acidic residues. One can recognise an S5 DRBM domain in the interval 48–111 (IQDRVVQIRR…EKARHAMFDV (64 aa)).

This sequence belongs to the universal ribosomal protein uS5 family. Part of the 30S ribosomal subunit. Contacts proteins S4 and S8.

With S4 and S12 plays an important role in translational accuracy. In terms of biological role, located at the back of the 30S subunit body where it stabilizes the conformation of the head with respect to the body. In Rubrobacter xylanophilus (strain DSM 9941 / JCM 11954 / NBRC 16129 / PRD-1), this protein is Small ribosomal subunit protein uS5.